Here is a 346-residue protein sequence, read N- to C-terminus: Annexin A1 (346 aa).

An N-acetylalanine modification is found at Ala-2. Residue Ser-5 is modified to Phosphoserine; by TRPM7. Gln-19 participates in a covalent cross-link: Isoglutamyl lysine isopeptide (Gln-Lys) (interchain with K-?). At Tyr-21 the chain carries Phosphotyrosine; by EGFR. Residue Ser-27 is modified to Phosphoserine; by PKC. Phosphoserine occurs at positions 34 and 37. Annexin repeat units follow at residues 42–113, 114–185, 197–269, and 273–344; these read FNPS…AMLK, TPAQ…ALAK, DLAD…TIVK, and STPA…ALCG. Lys-58 is modified (N6-acetyllysine). Residues Gly-59, Val-60, Glu-62, Lys-97, Leu-100, Glu-105, Met-127, Gly-129, Gly-131, Thr-132, and Glu-134 each coordinate Ca(2+). The residue at position 136 (Thr-136) is a Phosphothreonine. 3 residues coordinate Ca(2+): Asp-171, Gly-210, and Arg-213. A Glycyl lysine isopeptide (Lys-Gly) (interchain with G-Cter in SUMO1); alternate cross-link involves residue Lys-214. Residue Lys-214 forms a Glycyl lysine isopeptide (Lys-Gly) (interchain with G-Cter in SUMO2); alternate linkage. Ca(2+)-binding residues include Gly-215, Asp-253, Glu-255, and Leu-256. A Glycyl lysine isopeptide (Lys-Gly) (interchain with G-Cter in SUMO1) cross-link involves residue Lys-257. Ca(2+) is bound by residues Glu-261, Met-286, Gly-288, and Gly-290. Lys-312 bears the N6-acetyllysine mark. Cys-324 and Cys-343 are oxidised to a cystine. Positions 328, 330, and 331 each coordinate Ca(2+). Lys-332 is covalently cross-linked (Glycyl lysine isopeptide (Lys-Gly) (interchain with G-Cter in SUMO1)). Glu-336 provides a ligand contact to Ca(2+).

The protein belongs to the annexin family. As to quaternary structure, homodimer; non-covalently linked. Homodimer; linked by transglutamylation. Homodimers linked by transglutamylation are observed in placenta, but not in other tissues. Interacts with S100A11. Heterotetramer, formed by two molecules each of S100A11 and ANXA1. Interacts with DYSF. Interacts with EGFR. Post-translationally, phosphorylated by protein kinase C, EGFR and TRPM7. Phosphorylated in response to EGF treatment. Sumoylated. In terms of processing, proteolytically cleaved by cathepsin CTSG to release the active N-terminal peptide Ac2-26. As to expression, detected in eosinophils. Detected in lung, placenta, spleen and thymus (at protein level).

The protein resides in the nucleus. The protein localises to the cytoplasm. Its subcellular location is the cell projection. It is found in the cilium. It localises to the basolateral cell membrane. The protein resides in the lateral cell membrane. The protein localises to the cell membrane. Its subcellular location is the apical cell membrane. It is found in the membrane. It localises to the endosome membrane. The protein resides in the secreted. The protein localises to the extracellular space. Its subcellular location is the early endosome. It is found in the cytoplasmic vesicle membrane. It localises to the extracellular exosome. The protein resides in the cytoplasmic vesicle. The protein localises to the secretory vesicle lumen. Its subcellular location is the phagocytic cup. Its function is as follows. Plays important roles in the innate immune response as effector of glucocorticoid-mediated responses and regulator of the inflammatory process. Has anti-inflammatory activity. Plays a role in glucocorticoid-mediated down-regulation of the early phase of the inflammatory response. Contributes to the adaptive immune response by enhancing signaling cascades that are triggered by T-cell activation, regulates differentiation and proliferation of activated T-cells. Promotes the differentiation of T-cells into Th1 cells and negatively regulates differentiation into Th2 cells. Has no effect on unstimulated T-cells. Negatively regulates hormone exocytosis via activation of the formyl peptide receptors and reorganization of the actin cytoskeleton. Has high affinity for Ca(2+) and can bind up to eight Ca(2+) ions. Displays Ca(2+)-dependent binding to phospholipid membranes. Plays a role in the formation of phagocytic cups and phagosomes. Plays a role in phagocytosis by mediating the Ca(2+)-dependent interaction between phagosomes and the actin cytoskeleton. Functions at least in part by activating the formyl peptide receptors and downstream signaling cascades. Promotes chemotaxis of granulocytes and monocytes via activation of the formyl peptide receptors. Promotes rearrangement of the actin cytoskeleton, cell polarization and cell migration. Promotes resolution of inflammation and wound healing. Acts via neutrophil N-formyl peptide receptors to enhance the release of CXCL2. The sequence is that of Annexin A1 (Anxa1) from Rattus norvegicus (Rat).